The sequence spans 300 residues: Haloalkane dehalogenase (300 aa).

The region spanning 32–155 is the AB hydrolase-1 domain; the sequence is AIVFQHGNPT…PAVRGVFQGF (124 aa). Catalysis depends on D109, which acts as the Nucleophile. E133 serves as the catalytic Proton donor. H273 serves as the catalytic Proton acceptor.

The protein belongs to the haloalkane dehalogenase family. Type 2 subfamily. In terms of assembly, monomer.

The enzyme catalyses 1-haloalkane + H2O = a halide anion + a primary alcohol + H(+). Catalyzes hydrolytic cleavage of carbon-halogen bonds in halogenated aliphatic compounds, leading to the formation of the corresponding primary alcohols, halide ions and protons. The sequence is that of Haloalkane dehalogenase from Mycobacterium bovis (strain BCG / Pasteur 1173P2).